The primary structure comprises 235 residues: Carboxy-S-adenosyl-L-methionine synthase (235 aa).

S-adenosyl-L-methionine-binding positions include Tyr-35, 60–62, 84–85, 110–111, Asn-125, and Arg-192; these read GCS, DN, and DI.

Belongs to the class I-like SAM-binding methyltransferase superfamily. Cx-SAM synthase family. As to quaternary structure, homodimer.

It carries out the reaction prephenate + S-adenosyl-L-methionine = carboxy-S-adenosyl-L-methionine + 3-phenylpyruvate + H2O. Its function is as follows. Catalyzes the conversion of S-adenosyl-L-methionine (SAM) to carboxy-S-adenosyl-L-methionine (Cx-SAM). This Sulfurimonas denitrificans (strain ATCC 33889 / DSM 1251) (Thiomicrospira denitrificans (strain ATCC 33889 / DSM 1251)) protein is Carboxy-S-adenosyl-L-methionine synthase.